The following is a 521-amino-acid chain: Probable glycogen synthase (521 aa).

Belongs to the glycosyltransferase 1 family. Bacterial/plant glycogen synthase subfamily.

It carries out the reaction [(1-&gt;4)-alpha-D-glucosyl](n) + ADP-alpha-D-glucose = [(1-&gt;4)-alpha-D-glucosyl](n+1) + ADP + H(+). The protein operates within glycan biosynthesis; glycogen biosynthesis. Synthesizes alpha-1,4-glucan chains using ADP-glucose. The sequence is that of Probable glycogen synthase (glgA) from Methanocaldococcus jannaschii (strain ATCC 43067 / DSM 2661 / JAL-1 / JCM 10045 / NBRC 100440) (Methanococcus jannaschii).